Consider the following 136-residue polypeptide: Aspartate 1-decarboxylase (136 aa).

The active-site Schiff-base intermediate with substrate; via pyruvic acid is Ser25. Ser25 bears the Pyruvic acid (Ser) mark. Position 57 (Thr57) interacts with substrate. Residue Tyr58 is the Proton donor of the active site. A substrate-binding site is contributed by 73–75; it reads GAA.

Belongs to the PanD family. In terms of assembly, heterooctamer of four alpha and four beta subunits. Pyruvate is required as a cofactor. Is synthesized initially as an inactive proenzyme, which is activated by self-cleavage at a specific serine bond to produce a beta-subunit with a hydroxyl group at its C-terminus and an alpha-subunit with a pyruvoyl group at its N-terminus.

The protein resides in the cytoplasm. The catalysed reaction is L-aspartate + H(+) = beta-alanine + CO2. It participates in cofactor biosynthesis; (R)-pantothenate biosynthesis; beta-alanine from L-aspartate: step 1/1. Catalyzes the pyruvoyl-dependent decarboxylation of aspartate to produce beta-alanine. In Corynebacterium glutamicum (strain R), this protein is Aspartate 1-decarboxylase.